The sequence spans 485 residues: UDP-N-acetylmuramoyl-L-alanyl-D-glutamate--2,6-diaminopimelate ligase (485 aa).

Ser30 is a binding site for UDP-N-acetyl-alpha-D-muramoyl-L-alanyl-D-glutamate. 113 to 119 (GTNGKTT) is a binding site for ATP. Residues 155–156 (TT), Ser182, and Arg190 each bind UDP-N-acetyl-alpha-D-muramoyl-L-alanyl-D-glutamate. An N6-carboxylysine modification is found at Lys222. Meso-2,6-diaminopimelate contacts are provided by residues Arg381, 405–408 (DNPR), Gly455, and Glu459. Positions 405–408 (DNPR) match the Meso-diaminopimelate recognition motif motif.

It belongs to the MurCDEF family. MurE subfamily. Mg(2+) is required as a cofactor. Carboxylation is probably crucial for Mg(2+) binding and, consequently, for the gamma-phosphate positioning of ATP.

The protein localises to the cytoplasm. It catalyses the reaction UDP-N-acetyl-alpha-D-muramoyl-L-alanyl-D-glutamate + meso-2,6-diaminopimelate + ATP = UDP-N-acetyl-alpha-D-muramoyl-L-alanyl-gamma-D-glutamyl-meso-2,6-diaminopimelate + ADP + phosphate + H(+). It participates in cell wall biogenesis; peptidoglycan biosynthesis. Its function is as follows. Catalyzes the addition of meso-diaminopimelic acid to the nucleotide precursor UDP-N-acetylmuramoyl-L-alanyl-D-glutamate (UMAG) in the biosynthesis of bacterial cell-wall peptidoglycan. This Clostridium tetani (strain Massachusetts / E88) protein is UDP-N-acetylmuramoyl-L-alanyl-D-glutamate--2,6-diaminopimelate ligase.